The primary structure comprises 75 residues: Large ribosomal subunit protein bL28 (75 aa).

Belongs to the bacterial ribosomal protein bL28 family.

The protein is Large ribosomal subunit protein bL28 of Buchnera aphidicola subsp. Acyrthosiphon pisum (strain 5A).